A 374-amino-acid polypeptide reads, in one-letter code: Ribosomal RNA large subunit methyltransferase G (374 aa).

It belongs to the methyltransferase superfamily. RlmG family.

Its subcellular location is the cytoplasm. The enzyme catalyses guanosine(1835) in 23S rRNA + S-adenosyl-L-methionine = N(2)-methylguanosine(1835) in 23S rRNA + S-adenosyl-L-homocysteine + H(+). Its function is as follows. Specifically methylates the guanine in position 1835 (m2G1835) of 23S rRNA. The sequence is that of Ribosomal RNA large subunit methyltransferase G from Pseudomonas putida (strain W619).